Reading from the N-terminus, the 153-residue chain is NADPH-dependent 7-cyano-7-deazaguanine reductase (153 aa).

The span at 1–17 (MTDTRNLTQLGSKTQAP) shows a compositional bias: polar residues. Positions 1–23 (MTDTRNLTQLGSKTQAPASPEAA) are disordered. Cys51 (thioimide intermediate) is an active-site residue. Catalysis depends on Asp58, which acts as the Proton donor. Substrate-binding positions include 73-75 (VES) and 92-93 (HE).

This sequence belongs to the GTP cyclohydrolase I family. QueF type 1 subfamily.

It localises to the cytoplasm. It carries out the reaction 7-aminomethyl-7-carbaguanine + 2 NADP(+) = 7-cyano-7-deazaguanine + 2 NADPH + 3 H(+). The protein operates within tRNA modification; tRNA-queuosine biosynthesis. Its function is as follows. Catalyzes the NADPH-dependent reduction of 7-cyano-7-deazaguanine (preQ0) to 7-aminomethyl-7-deazaguanine (preQ1). The polypeptide is NADPH-dependent 7-cyano-7-deazaguanine reductase (Chelativorans sp. (strain BNC1)).